Here is a 732-residue protein sequence, read N- to C-terminus: Prolyl endopeptidase-like (732 aa).

Catalysis depends on charge relay system residues Ser575, Asp661, and His707.

Belongs to the peptidase S9A family. In terms of assembly, homodimer.

It localises to the cytoplasm. The protein resides in the cytosol. Its function is as follows. Serine peptidase whose precise substrate specificity remains unclear. Does not cleave peptides after a arginine or lysine residue. Regulates trans-Golgi network morphology and sorting by regulating the membrane binding of the AP-1 complex. May play a role in the regulation of synaptic vesicle exocytosis. The polypeptide is Prolyl endopeptidase-like (PREPL) (Gallus gallus (Chicken)).